A 617-amino-acid polypeptide reads, in one-letter code: Type IV inositol polyphosphate 5-phosphatase 6 (617 aa).

Disordered regions lie at residues 30–62 (EFQA…KNTK) and 241–330 (DFDP…VLYS). Low complexity predominate over residues 242 to 253 (FDPSFRGSSSSH). Residues 254-290 (RPSDYSRRPSDYSRRPSDYSRRPSDYSRRPSDSRPSD) show a composition bias toward basic and acidic residues. Residues 291-311 (YSRPSDYYSRPSDYSRPSDFS) show a composition bias toward low complexity. 2 catalytic regions span residues 458–473 (DRVI…IALS) and 538–553 (KRRT…WFGE).

This sequence belongs to the inositol polyphosphate 5-phosphatase family. As to expression, broadly expressed in emerging organs. Mostly localized in procambium of growing organs. Restricted to vascular differentiating cells of young organs.

It catalyses the reaction a 1,2-diacyl-sn-glycero-3-phospho-(1D-myo-inositol-4,5-bisphosphate) + H2O = a 1,2-diacyl-sn-glycero-3-phospho-(1D-myo-inositol 4-phosphate) + phosphate. The catalysed reaction is a 1,2-diacyl-sn-glycero-3-phospho-(1D-myo-inositol-3,4,5-trisphosphate) + H2O = a 1,2-diacyl-sn-glycero-3-phospho-(1D-myo-inositol-3,4-bisphosphate) + phosphate. Has phosphatase activity toward PtdIns(4,5)P2 and PtdIns(3,4,5)P3. Required for the patterning of procambium and during the differentiation of vascular tissues. Acts before the acquisition of preprocambial identity. Seems to be also involved in the abscisic acid (ABA) signaling pathway. Acts redundantly with CVL1 for maintaining vascular continuity. Regulates phosphoinositide-dependent VAN3 localization. The sequence is that of Type IV inositol polyphosphate 5-phosphatase 6 from Arabidopsis thaliana (Mouse-ear cress).